The chain runs to 332 residues: MAKDPVRVLVTGAAGQIGYALVPMIARGVMLGPDQPVILHMLDIAPAAESLNGVKMELVDAAFPLLKGVVATTDVVEACTGVNIAVMVGGFPRKEGMERKDVMSKNVSIYKSQASALEKHAAANCKVLVVANPANTNALILKEFAPSIPERNISCLTRLDHNRALGQISERLNVQVSDVKNVIIWGNHSSTQYPDVNHATVNTPAGEKPVRQLVSDDAWLNGEFISTVQQRGAAIIKARKLSSALSAASAACDHIRDWVLGTPQGTFVSMGVYSDGSYNVPSGLIYSFPVTCANGEWKIVQGLSIDEFSRKKLDLTAEELTEEKNLAHSCLS.

Residues 16–17, D43, and G90 each bind NAD(+); that span reads QI. Oxaloacetate is bound at residue R99. The NAD(+) site is built by Q113 and N132. Residues N132, R163, H188, and S243 each coordinate oxaloacetate. The active-site Proton acceptor is H188.

Belongs to the LDH/MDH superfamily. MDH type 2 family. In terms of assembly, homodimer.

It is found in the cytoplasm. It carries out the reaction (S)-malate + NAD(+) = oxaloacetate + NADH + H(+). This Medicago sativa (Alfalfa) protein is Malate dehydrogenase, cytoplasmic (CMDH).